A 1138-amino-acid polypeptide reads, in one-letter code: Solute carrier family 12 member 5 (1138 aa).

2 disordered regions span residues 1–62 (MSRR…KGRE) and 96–116 (QGSR…KPVQ). The Cytoplasmic segment spans residues 1 to 98 (MSRRFTVTSL…ANYTNLPQGS (98 aa)). Basic and acidic residues predominate over residues 21–45 (PESRRHSVADPRRLPREDVKGDGNP). A compositionally biased stretch (polar residues) spans 46-55 (KESSPFINST). Threonine 57 carries the phosphothreonine modification. A compositionally biased stretch (basic and acidic residues) spans 98–111 (SREHEEAENNEGGK). A discontinuously helical membrane pass occupies residues 99–120 (REHEEAENNEGGKKKPVQAPRM). Lysine 113 lines the K(+) pocket. Residues 121–129 (GTFMGVYLP) lie on the Extracellular side of the membrane. The chain crosses the membrane as a helical span at residues 130–151 (CLQNIFGVILFLRLTWVVGIAG). Topologically, residues 152 to 174 (IMESFCMVFICCSCTMLTAISMS) are cytoplasmic. A helical transmembrane segment spans residues 175-203 (AIATNGVVPAGGSYYMISRSLGPEFGGAV). Residue alanine 184 participates in chloride binding. Topologically, residues 204–229 (GLCFYLGTTFAGAMYILGTIEILLAY) are extracellular. 2 consecutive transmembrane segments (helical) span residues 230–250 (LFPA…AAML) and 251–276 (NNMR…KYVN). The Extracellular portion of the chain corresponds to 277-402 (KFALVFLGCV…ERRGMPSVGL (126 aa)). Cysteine 310 and cysteine 325 form a disulfide bridge. Residues asparagine 314, asparagine 333, asparagine 351, and asparagine 362 are each glycosylated (N-linked (GlcNAc...) asparagine). A disulfide bridge connects residues cysteine 345 and cysteine 354. Residues 403–420 (ADGTPVDMDHPYVFSDMT) traverse the membrane as a helical segment. A K(+)-binding site is contributed by methionine 410. Positions 414 and 415 each coordinate chloride. At 421 to 429 (SYFTLLVGI) the chain is on the cytoplasmic side. A helical membrane pass occupies residues 430 to 453 (YFPSVTGIMAGSNRSGDLRDAQKS). A K(+)-binding site is contributed by aspartate 446. Topologically, residues 454 to 485 (IPTGTILAIATTSAVYISSVVLFGACIEGVVL) are extracellular. A helical membrane pass occupies residues 486–513 (RDKFGEAVNGNLVVGTLAWPSPWVIVIG). The Cytoplasmic portion of the chain corresponds to 514 to 534 (SFFSTCGAGLQSLTGAPRLLQ). The next 2 membrane-spanning stretches (helical) occupy residues 535 to 555 (AISR…KANG) and 556 to 578 (EPTW…ASLD). Glutamate 569 is a binding site for chloride. Topologically, residues 579–592 (EVAPILSMFFLMCY) are cytoplasmic. The next 2 helical transmembrane spans lie at 593–615 (MFVN…PRFR) and 616–632 (YYHW…CLAL). Topologically, residues 633-1138 (MFICSWYYAL…GGREVITIYS (506 aa)) are cytoplasmic. Residues 667–681 (GIRGLSLSAARYALL) form a scissor helix region. Threonine 929 carries the post-translational modification Phosphothreonine; by OXSR1 and STK39. The segment at 943–1051 (HLTKNERERE…GPSPVSSEGI (109 aa)) is disordered. A compositionally biased stretch (basic and acidic residues) spans 945 to 962 (TKNEREREIQSITDESRG). A compositionally biased stretch (acidic residues) spans 982 to 994 (TACDNEEKPEEEV). A compositionally biased stretch (low complexity) spans 1001–1012 (SAPSCPSSSPSP). Residues 1019–1041 (ERETDPEVHLTWTKDKSVAEKNK) show a composition bias toward basic and acidic residues. Threonine 1029 bears the Phosphothreonine; by OXSR1 and STK39 mark. Phosphoserine is present on residues serine 1044, serine 1047, and serine 1048.

The protein belongs to the SLC12A transporter family. K/Cl co-transporter subfamily. As to quaternary structure, homodimer; adopts a domain-swap conformation at the scissor helices connecting the transmembrane domain and C-terminal domain. Heterodimer with K-Cl cotransporters SLC12A6 and SLC12A7. Interacts with AP2A1. In terms of processing, phosphorylated at Thr-929 and Thr-1029 by OXSR1/OSR1 and STK39/SPAK downstream of WNK kinases (WNK1, WNK2, WNK3 or WNK4), inhibiting the potassium-chloride cotransport activity. In terms of tissue distribution, expressed in brainstem, spinal cord and olfactory bulb of 17 dpc embryos. Expressed in all parts of the brain and spinal cord in postnatal day 14 mice. Expressed in brainstem and spinal cord of 17 dpc embryos. Expressed in all parts of the brain and spinal cord in postnatal day 14 mice.

The protein localises to the cell membrane. The protein resides in the cell projection. Its subcellular location is the dendrite. The enzyme catalyses K(+)(in) + chloride(in) = K(+)(out) + chloride(out). Its activity is regulated as follows. Inhibited following phosphorylation by OXSR1/OSR1 and STK39/SPAK: phosphorylation takes place downstream of WNK kinases (WNK1, WNK2, WNK3 or WNK4) in response to hyperosmotic stress and subsequent cell shrinkage. Its function is as follows. Mediates electroneutral potassium-chloride cotransport in mature neurons and is required for neuronal Cl(-) homeostasis. As major extruder of intracellular chloride, it establishes the low neuronal Cl(-) levels required for chloride influx after binding of GABA-A and glycine to their receptors, with subsequent hyperpolarization and neuronal inhibition. Involved in the regulation of dendritic spine formation and maturation. The polypeptide is Solute carrier family 12 member 5 (Slc12a5) (Mus musculus (Mouse)).